A 164-amino-acid polypeptide reads, in one-letter code: Pyruvoyl-dependent arginine decarboxylase (164 aa).

Ser-52 is modified (pyruvic acid (Ser)).

The protein belongs to the PdaD family. Pyruvate is required as a cofactor.

It carries out the reaction L-arginine + H(+) = agmatine + CO2. The sequence is that of Pyruvoyl-dependent arginine decarboxylase from Methanococcus maripaludis (strain C5 / ATCC BAA-1333).